The following is a 344-amino-acid chain: N-acetyl-gamma-glutamyl-phosphate reductase (344 aa).

Cys-148 is a catalytic residue.

Belongs to the NAGSA dehydrogenase family. Type 1 subfamily.

The protein resides in the cytoplasm. It carries out the reaction N-acetyl-L-glutamate 5-semialdehyde + phosphate + NADP(+) = N-acetyl-L-glutamyl 5-phosphate + NADPH + H(+). It functions in the pathway amino-acid biosynthesis; L-arginine biosynthesis; N(2)-acetyl-L-ornithine from L-glutamate: step 3/4. Catalyzes the NADPH-dependent reduction of N-acetyl-5-glutamyl phosphate to yield N-acetyl-L-glutamate 5-semialdehyde. The sequence is that of N-acetyl-gamma-glutamyl-phosphate reductase from Geobacillus thermodenitrificans (strain NG80-2).